The sequence spans 335 residues: 3-isopropylmalate dehydrogenase (335 aa).

Residues Arg87, Arg97, Arg121, and Asp211 each coordinate substrate. The Mg(2+) site is built by Asp211, Asp235, and Asp239. Position 271 to 283 (271 to 283 (GSAPDIAGQSKAD)) interacts with NAD(+).

This sequence belongs to the isocitrate and isopropylmalate dehydrogenases family. LeuB type 2 subfamily. In terms of assembly, homodimer. It depends on Mg(2+) as a cofactor. Mn(2+) serves as cofactor.

The protein resides in the cytoplasm. The catalysed reaction is (2R,3S)-3-isopropylmalate + NAD(+) = 4-methyl-2-oxopentanoate + CO2 + NADH. Its pathway is amino-acid biosynthesis; L-leucine biosynthesis; L-leucine from 3-methyl-2-oxobutanoate: step 3/4. Its function is as follows. Catalyzes the oxidation of 3-carboxy-2-hydroxy-4-methylpentanoate (3-isopropylmalate) to 3-carboxy-4-methyl-2-oxopentanoate. The product decarboxylates to 4-methyl-2 oxopentanoate. This is 3-isopropylmalate dehydrogenase from Nocardia farcinica (strain IFM 10152).